The sequence spans 66 residues: Ranalexin (66 aa).

Residues 1–20 form the signal peptide; sequence MFTLKKSLLLLFFLGTINLS. A propeptide spans 21 to 44 (small acidic peptide); the sequence is LCEEERNAEEERRDNPDERDVEVE. Cysteine 60 and cysteine 66 are joined by a disulfide.

The protein belongs to the frog skin active peptide (FSAP) family. Brevinin subfamily. Expressed by the skin dorsal glands.

It is found in the secreted. Its function is as follows. Potent microbicidal activity, active against S.aureus and E.coli. It also acts as a membrane-disruptive agent at higher concentrations. The chain is Ranalexin from Aquarana catesbeiana (American bullfrog).